The primary structure comprises 881 residues: Phosphoenolpyruvate carboxylase (881 aa).

Active-site residues include H138 and K545.

It belongs to the PEPCase type 1 family. Mg(2+) serves as cofactor.

It catalyses the reaction oxaloacetate + phosphate = phosphoenolpyruvate + hydrogencarbonate. Functionally, forms oxaloacetate, a four-carbon dicarboxylic acid source for the tricarboxylic acid cycle. This is Phosphoenolpyruvate carboxylase from Shewanella oneidensis (strain ATCC 700550 / JCM 31522 / CIP 106686 / LMG 19005 / NCIMB 14063 / MR-1).